Reading from the N-terminus, the 365-residue chain is Putative agmatine deiminase (365 aa).

Residues Glu214 and Asp220 each contribute to the agmatine site. Cys357 acts as the Amidino-cysteine intermediate in catalysis.

It belongs to the agmatine deiminase family. In terms of assembly, tetramer of two homodimers.

It carries out the reaction agmatine + H2O = N-carbamoylputrescine + NH4(+). The chain is Putative agmatine deiminase from Enterococcus faecalis (strain ATCC 700802 / V583).